We begin with the raw amino-acid sequence, 391 residues long: Lipid-A-disaccharide synthase (391 aa).

This sequence belongs to the LpxB family.

It carries out the reaction a lipid X + a UDP-2-N,3-O-bis[(3R)-3-hydroxyacyl]-alpha-D-glucosamine = a lipid A disaccharide + UDP + H(+). It participates in bacterial outer membrane biogenesis; LPS lipid A biosynthesis. Its function is as follows. Condensation of UDP-2,3-diacylglucosamine and 2,3-diacylglucosamine-1-phosphate to form lipid A disaccharide, a precursor of lipid A, a phosphorylated glycolipid that anchors the lipopolysaccharide to the outer membrane of the cell. The polypeptide is Lipid-A-disaccharide synthase (Rickettsia akari (strain Hartford)).